Consider the following 1384-residue polypeptide: DNA-directed RNA polymerase subunit beta'' (1384 aa).

Zn(2+) is bound by residues Cys-224, Cys-297, Cys-304, and Cys-307.

The protein belongs to the RNA polymerase beta' chain family. RpoC2 subfamily. In plastids the minimal PEP RNA polymerase catalytic core is composed of four subunits: alpha, beta, beta', and beta''. When a (nuclear-encoded) sigma factor is associated with the core the holoenzyme is formed, which can initiate transcription. It depends on Zn(2+) as a cofactor.

It localises to the plastid. The protein localises to the chloroplast. The catalysed reaction is RNA(n) + a ribonucleoside 5'-triphosphate = RNA(n+1) + diphosphate. DNA-dependent RNA polymerase catalyzes the transcription of DNA into RNA using the four ribonucleoside triphosphates as substrates. The polypeptide is DNA-directed RNA polymerase subunit beta'' (Sinapis alba (White mustard)).